A 278-amino-acid polypeptide reads, in one-letter code: Urease accessory protein UreD 3 (278 aa).

The protein belongs to the UreD family. As to quaternary structure, ureD, UreF and UreG form a complex that acts as a GTP-hydrolysis-dependent molecular chaperone, activating the urease apoprotein by helping to assemble the nickel containing metallocenter of UreC. The UreE protein probably delivers the nickel.

The protein resides in the cytoplasm. In terms of biological role, required for maturation of urease via the functional incorporation of the urease nickel metallocenter. The protein is Urease accessory protein UreD 3 of Bradyrhizobium sp. (strain BTAi1 / ATCC BAA-1182).